Here is a 278-residue protein sequence, read N- to C-terminus: uncharacterized protein (278 aa).

The protein localises to the cytoplasm. It is found in the nucleus. In terms of biological role, probable methyltransferase. This is an uncharacterized protein from Schizosaccharomyces pombe (strain 972 / ATCC 24843) (Fission yeast).